The sequence spans 114 residues: Cell division protein FtsB (114 aa).

At 1–3 (MGK) the chain is on the cytoplasmic side. Residues 4–21 (LTLLLVVLLGWLQYSLWV) form a helical membrane-spanning segment. Over 22 to 114 (GKNGVHDYMR…ASYPSVTASH (93 aa)) the chain is Periplasmic. Residues 31–62 (RVKQDVATQQANNAKLKSRNDQLFAEIDDLNG) adopt a coiled-coil conformation.

The protein belongs to the FtsB family. In terms of assembly, part of a complex composed of FtsB, FtsL and FtsQ.

Its subcellular location is the cell inner membrane. Its function is as follows. Essential cell division protein. May link together the upstream cell division proteins, which are predominantly cytoplasmic, with the downstream cell division proteins, which are predominantly periplasmic. The protein is Cell division protein FtsB of Edwardsiella ictaluri (strain 93-146).